The primary structure comprises 276 residues: Urease accessory protein UreD (276 aa).

It belongs to the UreD family. In terms of assembly, ureD, UreF and UreG form a complex that acts as a GTP-hydrolysis-dependent molecular chaperone, activating the urease apoprotein by helping to assemble the nickel containing metallocenter of UreC. The UreE protein probably delivers the nickel.

The protein localises to the cytoplasm. Functionally, required for maturation of urease via the functional incorporation of the urease nickel metallocenter. The sequence is that of Urease accessory protein UreD from Paracidovorax citrulli (strain AAC00-1) (Acidovorax citrulli).